Consider the following 215-residue polypeptide: Putative O-methyltransferase MAB_1361c (215 aa).

Residues valine 42, glutamate 64, 66–67 (GT), serine 72, aspartate 90, and valine 91 each bind S-adenosyl-L-methionine. Aspartate 138 provides a ligand contact to substrate.

The protein belongs to the class I-like SAM-binding methyltransferase superfamily. Cation-dependent O-methyltransferase family.

This is Putative O-methyltransferase MAB_1361c from Mycobacteroides abscessus (strain ATCC 19977 / DSM 44196 / CCUG 20993 / CIP 104536 / JCM 13569 / NCTC 13031 / TMC 1543 / L948) (Mycobacterium abscessus).